The sequence spans 701 residues: Elongation factor G (701 aa).

Residues Thr-11–Leu-287 enclose the tr-type G domain. GTP-binding positions include Ala-20 to Thr-27, Asp-84 to His-88, and Asn-138 to Asp-141.

It belongs to the TRAFAC class translation factor GTPase superfamily. Classic translation factor GTPase family. EF-G/EF-2 subfamily.

The protein resides in the cytoplasm. Functionally, catalyzes the GTP-dependent ribosomal translocation step during translation elongation. During this step, the ribosome changes from the pre-translocational (PRE) to the post-translocational (POST) state as the newly formed A-site-bound peptidyl-tRNA and P-site-bound deacylated tRNA move to the P and E sites, respectively. Catalyzes the coordinated movement of the two tRNA molecules, the mRNA and conformational changes in the ribosome. In Mycobacterium avium (strain 104), this protein is Elongation factor G.